The primary structure comprises 507 residues: Capsid vertex component 1 (507 aa).

Residues 219-257 (AAAETSVSKHHPALENPSNIRGSAGGEGGGGRAGTGGTV) are disordered. Over residues 241 to 257 (SAGGEGGGGRAGTGGTV) the composition is skewed to gly residues.

The protein belongs to the herpesviridae CVC1 protein family. Interacts (via C-terminus) with capsid vertex component 2/CVC2.

Its subcellular location is the virion. The protein resides in the host nucleus. Capsid vertex-specific component that plays a role during viral DNA encapsidation, assuring correct genome cleavage and presumably stabilizing capsids that contain full-length viral genomes. The sequence is that of Capsid vertex component 1 from Epstein-Barr virus (strain B95-8) (HHV-4).